A 263-amino-acid chain; its full sequence is uncharacterized protein (263 aa).

Residues 107-246 (ILGVLNGDGS…CCSFLEKLGI (140 aa)) form the DOD-type homing endonuclease domain.

This is an uncharacterized protein from Methanocaldococcus jannaschii (strain ATCC 43067 / DSM 2661 / JAL-1 / JCM 10045 / NBRC 100440) (Methanococcus jannaschii).